The chain runs to 318 residues: Aspartate carbamoyltransferase catalytic subunit (318 aa).

Residues R67 and T68 each contribute to the carbamoyl phosphate site. K95 provides a ligand contact to L-aspartate. The carbamoyl phosphate site is built by R117, H145, and Q148. R178 and R236 together coordinate L-aspartate. Positions 277 and 278 each coordinate carbamoyl phosphate.

This sequence belongs to the aspartate/ornithine carbamoyltransferase superfamily. ATCase family. Heterododecamer (2C3:3R2) of six catalytic PyrB chains organized as two trimers (C3), and six regulatory PyrI chains organized as three dimers (R2).

It catalyses the reaction carbamoyl phosphate + L-aspartate = N-carbamoyl-L-aspartate + phosphate + H(+). It functions in the pathway pyrimidine metabolism; UMP biosynthesis via de novo pathway; (S)-dihydroorotate from bicarbonate: step 2/3. Its function is as follows. Catalyzes the condensation of carbamoyl phosphate and aspartate to form carbamoyl aspartate and inorganic phosphate, the committed step in the de novo pyrimidine nucleotide biosynthesis pathway. The chain is Aspartate carbamoyltransferase catalytic subunit from Roseiflexus castenholzii (strain DSM 13941 / HLO8).